A 221-amino-acid polypeptide reads, in one-letter code: Protein lethal(2)k10201 (221 aa).

2 C2H2-type zinc fingers span residues 74 to 97 (YSCV…TEQH) and 113 to 138 (FSCF…IITH). The interval 146-168 (FDHSKNRGKQKHQGKSKPNSMEV) is disordered. Positions 151–160 (NRGKQKHQGK) are enriched in basic residues.

Its function is as follows. Vital for development. The polypeptide is Protein lethal(2)k10201 (l(2)k10201) (Drosophila melanogaster (Fruit fly)).